The chain runs to 277 residues: Probable redox regulatory protein ML2435 (277 aa).

Belongs to the Rv0495c family.

Essential for maintaining intracellular redox homeostasis. In Mycobacterium leprae (strain TN), this protein is Probable redox regulatory protein ML2435.